We begin with the raw amino-acid sequence, 519 residues long: Exodeoxyribonuclease 7 large subunit (519 aa).

Residues 500 to 519 (VGRGKTRKPKEEPPAQGSLL) are disordered.

This sequence belongs to the XseA family. Heterooligomer composed of large and small subunits.

It is found in the cytoplasm. The enzyme catalyses Exonucleolytic cleavage in either 5'- to 3'- or 3'- to 5'-direction to yield nucleoside 5'-phosphates.. Functionally, bidirectionally degrades single-stranded DNA into large acid-insoluble oligonucleotides, which are then degraded further into small acid-soluble oligonucleotides. The sequence is that of Exodeoxyribonuclease 7 large subunit from Cereibacter sphaeroides (strain KD131 / KCTC 12085) (Rhodobacter sphaeroides).